The sequence spans 243 residues: EFFHGWYMEPLTKGRYPDIMRQIVGTRLPNFTEDEAELVAGSYDFLGLNYYVTQYAKPKPNPYPSEKHTAMDDAGVDLTFKNSRGEYPGPVFAEDANSYYYPKGIYYVMDYFKTKYGNPLIYITENGISTPGSESRCERIADYKRINYHCSHLCFLSKVIKEKGVNVRGYFAWALGDNYEFGKGFTVRFGLSYVNWDDLNDRNLKESGKWYQRFINGTAKNPVKQNFLRSSLSSQNQKKRLAC.

An N-linked (GlcNAc...) asparagine glycan is attached at Asn30. Tyr51 lines the substrate pocket. The active-site Nucleophile is the Glu125. Substrate is bound by residues Trp173 and 180 to 181 (EF). N-linked (GlcNAc...) asparagine glycosylation occurs at Asn216.

The protein belongs to the glycosyl hydrolase 1 family. In terms of assembly, homodimer. In vacuoles called myrosin grains of a certain class of cells, myrosin cells, distributed in the cotyledons and the axis of the embryo as well as in different organs of the growing plant.

The protein resides in the vacuole. The enzyme catalyses a thioglucoside + H2O = a sugar + a thiol.. In terms of biological role, degradation of glucosinolates (glucose residue linked by a thioglucoside bound to an amino acid derivative) to glucose, sulfate and any of the products: thiocyanates, isothiocyanates, nitriles, epithionitriles or oxazolidine-2-thiones. This Sinapis alba (White mustard) protein is Myrosinase MB2.